Reading from the N-terminus, the 402-residue chain is Argininosuccinate synthase (402 aa).

Residues 13-21 and A40 contribute to the ATP site; that span reads AYSGGLDTS. Residues Y91 and S96 each contribute to the L-citrulline site. Residue G121 coordinates ATP. The L-aspartate site is built by T123, N127, and D128. N127 lines the L-citrulline pocket. 5 residues coordinate L-citrulline: R131, S180, S189, E265, and Y277.

It belongs to the argininosuccinate synthase family. Type 1 subfamily. In terms of assembly, homotetramer.

It is found in the cytoplasm. It catalyses the reaction L-citrulline + L-aspartate + ATP = 2-(N(omega)-L-arginino)succinate + AMP + diphosphate + H(+). Its pathway is amino-acid biosynthesis; L-arginine biosynthesis; L-arginine from L-ornithine and carbamoyl phosphate: step 2/3. This Leptospira biflexa serovar Patoc (strain Patoc 1 / Ames) protein is Argininosuccinate synthase.